The following is a 249-amino-acid chain: Glucosamine-6-phosphate deaminase (249 aa).

Residue aspartate 67 is the Proton acceptor; for enolization step of the active site. Residue asparagine 136 is the For ring-opening step of the active site. The active-site Proton acceptor; for ring-opening step is histidine 138. Residue glutamate 143 is the For ring-opening step of the active site.

Belongs to the glucosamine/galactosamine-6-phosphate isomerase family. NagB subfamily.

The catalysed reaction is alpha-D-glucosamine 6-phosphate + H2O = beta-D-fructose 6-phosphate + NH4(+). The protein operates within amino-sugar metabolism; N-acetylneuraminate degradation; D-fructose 6-phosphate from N-acetylneuraminate: step 5/5. Its function is as follows. Catalyzes the reversible isomerization-deamination of glucosamine 6-phosphate (GlcN6P) to form fructose 6-phosphate (Fru6P) and ammonium ion. This is Glucosamine-6-phosphate deaminase from Clostridium botulinum (strain Alaska E43 / Type E3).